The following is a 170-amino-acid chain: Urease accessory protein UreE (170 aa).

The interval 134–170 (ESGAYGGGHHHHGDDGHHPLAPIPLRQKIHRPSDKAE) is disordered.

This sequence belongs to the UreE family.

It is found in the cytoplasm. Involved in urease metallocenter assembly. Binds nickel. Probably functions as a nickel donor during metallocenter assembly. This Janthinobacterium sp. (strain Marseille) (Minibacterium massiliensis) protein is Urease accessory protein UreE.